The primary structure comprises 274 residues: MGIRKLKPVTPGQRHRIVGMFSEITATIPEKSLVFGKCKSGGRNAEGHRTVRHIGGGHKRRFRLIDFKRNKDGIPARVKSIEYDPNRSARIALLYYADGEKVYIVAPNGLKVNQLIVSGKEAPPEVGNSLPLADIPLGTIIHNIELRPGQGAKMVRSAGVFAQVVSREGNYVIVRMPSGETRKVLALCRASIGSVSNSEHALEKSGKAGRIRWLGHCPHVRGVAMNPVDHPMGGGEGRASGGHPRSRKGLYAKGLKTRNLKKYSSRYIIESKKK.

A disordered region spans residues 228-254; that stretch reads VDHPMGGGEGRASGGHPRSRKGLYAKG. Over residues 244-254 the composition is skewed to basic residues; the sequence is PRSRKGLYAKG.

It belongs to the universal ribosomal protein uL2 family. As to quaternary structure, part of the 50S ribosomal subunit. Forms a bridge to the 30S subunit in the 70S ribosome.

Its function is as follows. One of the primary rRNA binding proteins. Required for association of the 30S and 50S subunits to form the 70S ribosome, for tRNA binding and peptide bond formation. It has been suggested to have peptidyltransferase activity; this is somewhat controversial. Makes several contacts with the 16S rRNA in the 70S ribosome. The protein is Large ribosomal subunit protein uL2 of Azobacteroides pseudotrichonymphae genomovar. CFP2.